Reading from the N-terminus, the 138-residue chain is UPF0047 protein MJ1081 (138 aa).

The protein belongs to the UPF0047 family.

The chain is UPF0047 protein MJ1081 from Methanocaldococcus jannaschii (strain ATCC 43067 / DSM 2661 / JAL-1 / JCM 10045 / NBRC 100440) (Methanococcus jannaschii).